A 679-amino-acid chain; its full sequence is Glycine--tRNA ligase beta subunit (679 aa).

Belongs to the class-II aminoacyl-tRNA synthetase family. In terms of assembly, tetramer of two alpha and two beta subunits.

The protein localises to the cytoplasm. The catalysed reaction is tRNA(Gly) + glycine + ATP = glycyl-tRNA(Gly) + AMP + diphosphate. The protein is Glycine--tRNA ligase beta subunit of Streptococcus pyogenes serotype M3 (strain ATCC BAA-595 / MGAS315).